The following is a 299-amino-acid chain: MATYPESLLILNGKSAGNELLREAITELRDNGVIIHVRVTWEKGDAARYIEEACQLGVETVIAGGGDGTINEIATALIERDAAERPAMGILPLGTANDFATSAGIPESLEKALQLAIVGKAAAVDIAQVNDKTCFINMATGGFGTRITSETPEKLKAALGGVSYLIHGLMRMDMLKPDRCEINGENFHWQGDALVIGIGNGRQAGGGQQLCPDALINDGLLQLRIFTSDGLLPALFTTLTNPEESPNILDGQSEWFEIIAPHGMTFNLDGEPLSGEHFRISLLPRALNCRLPPDCPLLR.

The region spanning 2 to 133 (ATYPESLLIL…VDIAQVNDKT (132 aa)) is the DAGKc domain. Residues Thr40, 66–72 (GDGTINE), and Thr95 each bind ATP. Mg(2+)-binding residues include Leu215, Asp218, and Leu220. Catalysis depends on Glu271, which acts as the Proton acceptor.

It belongs to the diacylglycerol/lipid kinase family. YegS lipid kinase subfamily. The cofactor is Mg(2+). Ca(2+) is required as a cofactor.

The protein resides in the cytoplasm. Functionally, probably phosphorylates lipids; the in vivo substrate is unknown. This is Probable lipid kinase YegS-like from Enterobacter sp. (strain 638).